Reading from the N-terminus, the 134-residue chain is 6,7-dimethyl-8-ribityllumazine synthase (134 aa).

5-amino-6-(D-ribitylamino)uracil is bound by residues Phe-11, 43–45 (AYD), and 67–69 (AIV). 72 to 73 (DT) lines the (2S)-2-hydroxy-3-oxobutyl phosphate pocket. His-75 functions as the Proton donor in the catalytic mechanism. Position 100 (Phe-100) interacts with 5-amino-6-(D-ribitylamino)uracil. Arg-115 is a (2S)-2-hydroxy-3-oxobutyl phosphate binding site.

It belongs to the DMRL synthase family.

It catalyses the reaction (2S)-2-hydroxy-3-oxobutyl phosphate + 5-amino-6-(D-ribitylamino)uracil = 6,7-dimethyl-8-(1-D-ribityl)lumazine + phosphate + 2 H2O + H(+). The protein operates within cofactor biosynthesis; riboflavin biosynthesis; riboflavin from 2-hydroxy-3-oxobutyl phosphate and 5-amino-6-(D-ribitylamino)uracil: step 1/2. Its function is as follows. Catalyzes the formation of 6,7-dimethyl-8-ribityllumazine by condensation of 5-amino-6-(D-ribitylamino)uracil with 3,4-dihydroxy-2-butanone 4-phosphate. This is the penultimate step in the biosynthesis of riboflavin. The chain is 6,7-dimethyl-8-ribityllumazine synthase from Halorubrum lacusprofundi (strain ATCC 49239 / DSM 5036 / JCM 8891 / ACAM 34).